The following is a 275-amino-acid chain: Ribosomal protein L11 methyltransferase (275 aa).

S-adenosyl-L-methionine contacts are provided by Thr130, Gly151, Asp172, and Asn213.

Belongs to the methyltransferase superfamily. PrmA family.

The protein localises to the cytoplasm. It carries out the reaction L-lysyl-[protein] + 3 S-adenosyl-L-methionine = N(6),N(6),N(6)-trimethyl-L-lysyl-[protein] + 3 S-adenosyl-L-homocysteine + 3 H(+). Its function is as follows. Methylates ribosomal protein L11. This chain is Ribosomal protein L11 methyltransferase, found in Wolinella succinogenes (strain ATCC 29543 / DSM 1740 / CCUG 13145 / JCM 31913 / LMG 7466 / NCTC 11488 / FDC 602W) (Vibrio succinogenes).